We begin with the raw amino-acid sequence, 306 residues long: Glutaminase (306 aa).

Substrate contacts are provided by Ser64, Asn115, Glu159, Asn166, Tyr190, Tyr242, and Val260.

This sequence belongs to the glutaminase family. As to quaternary structure, homotetramer.

It catalyses the reaction L-glutamine + H2O = L-glutamate + NH4(+). The protein is Glutaminase of Aliivibrio fischeri (strain ATCC 700601 / ES114) (Vibrio fischeri).